We begin with the raw amino-acid sequence, 217 residues long: Transmembrane protein 253 (217 aa).

The next 4 helical transmembrane spans lie at 33–53, 62–82, 96–116, and 138–158; these read LVLAVSQLWLAVVVVPLAVSV, MATALPLGPGASGLLTGTVTL, MMIFNTFNLILGFIVVVVEVM, and LSAEAFTLGGVLVSVHALFLL. The interval 187 to 217 is disordered; sequence PGLENGPTVASTGANERVGQREQTRAALLPP.

It is found in the membrane. The polypeptide is Transmembrane protein 253 (TMEM253) (Homo sapiens (Human)).